The primary structure comprises 358 residues: UDP-N-acetylglucosamine--N-acetylmuramyl-(pentapeptide) pyrophosphoryl-undecaprenol N-acetylglucosamine transferase (358 aa).

Residues 11–13, arginine 163, serine 191, isoleucine 245, and glutamine 290 each bind UDP-N-acetyl-alpha-D-glucosamine; that span reads TGG.

It belongs to the glycosyltransferase 28 family. MurG subfamily.

Its subcellular location is the cell inner membrane. The catalysed reaction is di-trans,octa-cis-undecaprenyl diphospho-N-acetyl-alpha-D-muramoyl-L-alanyl-D-glutamyl-meso-2,6-diaminopimeloyl-D-alanyl-D-alanine + UDP-N-acetyl-alpha-D-glucosamine = di-trans,octa-cis-undecaprenyl diphospho-[N-acetyl-alpha-D-glucosaminyl-(1-&gt;4)]-N-acetyl-alpha-D-muramoyl-L-alanyl-D-glutamyl-meso-2,6-diaminopimeloyl-D-alanyl-D-alanine + UDP + H(+). It participates in cell wall biogenesis; peptidoglycan biosynthesis. Its function is as follows. Cell wall formation. Catalyzes the transfer of a GlcNAc subunit on undecaprenyl-pyrophosphoryl-MurNAc-pentapeptide (lipid intermediate I) to form undecaprenyl-pyrophosphoryl-MurNAc-(pentapeptide)GlcNAc (lipid intermediate II). The chain is UDP-N-acetylglucosamine--N-acetylmuramyl-(pentapeptide) pyrophosphoryl-undecaprenol N-acetylglucosamine transferase from Janthinobacterium sp. (strain Marseille) (Minibacterium massiliensis).